Consider the following 187-residue polypeptide: Threonylcarbamoyl-AMP synthase (187 aa).

Residues 4–187 enclose the YrdC-like domain; it reads NHTDDPFLLD…GHSGQTIRDN (184 aa). Positions 168–187 are disordered; sequence GSRSPSKIRHGHSGQTIRDN.

The protein belongs to the SUA5 family. TsaC subfamily.

The protein localises to the cytoplasm. It catalyses the reaction L-threonine + hydrogencarbonate + ATP = L-threonylcarbamoyladenylate + diphosphate + H2O. In terms of biological role, required for the formation of a threonylcarbamoyl group on adenosine at position 37 (t(6)A37) in tRNAs that read codons beginning with adenine. Catalyzes the conversion of L-threonine, HCO(3)(-)/CO(2) and ATP to give threonylcarbamoyl-AMP (TC-AMP) as the acyladenylate intermediate, with the release of diphosphate. This is Threonylcarbamoyl-AMP synthase from Pseudoalteromonas atlantica (strain T6c / ATCC BAA-1087).